Consider the following 142-residue polypeptide: Putative pre-16S rRNA nuclease (142 aa).

This sequence belongs to the YqgF nuclease family.

It is found in the cytoplasm. Functionally, could be a nuclease involved in processing of the 5'-end of pre-16S rRNA. This is Putative pre-16S rRNA nuclease from Lactobacillus delbrueckii subsp. bulgaricus (strain ATCC BAA-365 / Lb-18).